Consider the following 688-residue polypeptide: Glycine--tRNA ligase beta subunit (688 aa).

Belongs to the class-II aminoacyl-tRNA synthetase family. In terms of assembly, tetramer of two alpha and two beta subunits.

It localises to the cytoplasm. The enzyme catalyses tRNA(Gly) + glycine + ATP = glycyl-tRNA(Gly) + AMP + diphosphate. The sequence is that of Glycine--tRNA ligase beta subunit from Desulforudis audaxviator (strain MP104C).